We begin with the raw amino-acid sequence, 854 residues long: V-type proton ATPase 116 kDa subunit a 2 (854 aa).

Residues 1 to 393 (MGSLFRSETM…DAYGVGSYQE (393 aa)) lie on the Cytoplasmic side of the membrane. Residues 394-412 (VNPALFTIITFPFLFAVMF) traverse the membrane as a helical segment. At 413-414 (GD) the chain is on the vacuolar side. The chain crosses the membrane as a helical span at residues 415-431 (FGHGFVMFLFALLLVLN). Residues 432 to 445 (ENHPRLNQSQEIMR) lie on the Cytoplasmic side of the membrane. The chain crosses the membrane as a helical span at residues 446–475 (MFFNGRYILLLMGLFSVYTGLIYNDCFSKS). Over 476–549 (VNLFGSRWNV…ATNRLTFLNS (74 aa)) the chain is Vacuolar. A helical membrane pass occupies residues 550-569 (FKMKMSVILGITHMTFGVIL). Topologically, residues 570 to 587 (GIFNHLHFRKKFNICLVS) are cytoplasmic. A helical membrane pass occupies residues 588-608 (IPELLFMLCIFGYLIFMIIYK). At 609–651 (WLVYSAETSRTAPSILIEFISMFLFLASDTGGLYPGQEHVQRL) the chain is on the vacuolar side. A helical transmembrane segment spans residues 652-671 (LLLITVLSVPVLFLGKPLFL). The Cytoplasmic segment spans residues 672-739 (LWLHRGRSCF…EILMTQIIHS (68 aa)). Residues serine 695 and serine 700 each carry the phosphoserine modification. The chain crosses the membrane as a helical span at residues 740-764 (IEYCLGCISNTASYLRLWALSLAHA). The Vacuolar segment spans residues 765–785 (QLSEVLWAMLMHVGLRVDTAY). The helical transmembrane segment at 786–824 (GVLVLLPVIAFFAVLTIFILLIMEGLSAFLHAIRLHWVE) threads the bilayer. Over 825–854 (FQNKFYVGAGTKFVPFSFRLLSSKFSDDLA) the chain is Cytoplasmic.

Belongs to the V-ATPase 116 kDa subunit family. As to quaternary structure, V-ATPase is a heteromultimeric enzyme made up of two complexes: the ATP-hydrolytic V1 complex and the proton translocation V0 complex. The V1 complex consists of three catalytic AB heterodimers that form a heterohexamer, three peripheral stalks each consisting of EG heterodimers, one central rotor including subunits D and F, and the regulatory subunits C and H. The proton translocation complex V0 consists of the proton transport subunit a, a ring of proteolipid subunits c9c'', rotary subunit d, subunits e and f, and the accessory subunits ATP6AP1/Ac45 and ATP6AP2/PRR. Directly interacts with PSCD2 through its N-terminal cytosolic tail in an intra-endosomal acidification-dependent manner. Disruption of this interaction results in the inhibition of endocytosis. Interacts with SPAAR. In terms of tissue distribution, highly expressed in lung, kidney and spleen.

The protein resides in the cell membrane. Its subcellular location is the endosome membrane. Subunit of the V0 complex of vacuolar(H+)-ATPase (V-ATPase), a multisubunit enzyme composed of a peripheral complex (V1) that hydrolyzes ATP and a membrane integral complex (V0) that translocates protons. V-ATPase is responsible for acidifying and maintaining the pH of intracellular compartments and in some cell types, is targeted to the plasma membrane, where it is responsible for acidifying the extracellular environment. Essential component of the endosomal pH-sensing machinery. May play a role in maintaining the Golgi functions, such as glycosylation maturation, by controlling the Golgi pH. In aerobic conditions, involved in intracellular iron homeostasis, thus triggering the activity of Fe(2+) prolyl hydroxylase (PHD) enzymes, and leading to HIF1A hydroxylation and subsequent proteasomal degradation. In Bos taurus (Bovine), this protein is V-type proton ATPase 116 kDa subunit a 2 (ATP6V0A2).